Consider the following 531-residue polypeptide: CTP synthase (531 aa).

The segment at 1–267 (MTKYIIITGG…ASKILSKLNL (267 aa)) is amidoligase domain. Position 13 (serine 13) interacts with CTP. Serine 13 provides a ligand contact to UTP. 14–19 (SVGKGT) serves as a coordination point for ATP. An L-glutamine-binding site is contributed by tyrosine 54. Aspartate 71 is a binding site for ATP. Mg(2+) is bound by residues aspartate 71 and glutamate 141. Residues 148–150 (DIE), 188–193 (KTKPLQ), and lysine 224 contribute to the CTP site. UTP contacts are provided by residues 188-193 (KTKPLQ) and lysine 224. Residues 292 to 531 (KIALVGKYTK…IGFLRAAAGV (240 aa)) form the Glutamine amidotransferase type-1 domain. Residue glycine 355 participates in L-glutamine binding. The active-site Nucleophile; for glutamine hydrolysis is cysteine 382. Residues 383–386 (YGMQ), glutamate 406, and arginine 463 each bind L-glutamine. Active-site residues include histidine 507 and glutamate 509.

It belongs to the CTP synthase family. In terms of assembly, homotetramer.

It carries out the reaction UTP + L-glutamine + ATP + H2O = CTP + L-glutamate + ADP + phosphate + 2 H(+). The enzyme catalyses L-glutamine + H2O = L-glutamate + NH4(+). The catalysed reaction is UTP + NH4(+) + ATP = CTP + ADP + phosphate + 2 H(+). It functions in the pathway pyrimidine metabolism; CTP biosynthesis via de novo pathway; CTP from UDP: step 2/2. With respect to regulation, allosterically activated by GTP, when glutamine is the substrate; GTP has no effect on the reaction when ammonia is the substrate. The allosteric effector GTP functions by stabilizing the protein conformation that binds the tetrahedral intermediate(s) formed during glutamine hydrolysis. Inhibited by the product CTP, via allosteric rather than competitive inhibition. Its function is as follows. Catalyzes the ATP-dependent amination of UTP to CTP with either L-glutamine or ammonia as the source of nitrogen. Regulates intracellular CTP levels through interactions with the four ribonucleotide triphosphates. This chain is CTP synthase, found in Sulfurisphaera tokodaii (strain DSM 16993 / JCM 10545 / NBRC 100140 / 7) (Sulfolobus tokodaii).